A 296-amino-acid chain; its full sequence is Origin of replication complex subunit 6 (296 aa).

Residues 212–296 form a disordered region; that stretch reads PSKRKHDDDS…MALEVSSAAN (85 aa). Acidic residues predominate over residues 220 to 236; the sequence is DSDSSGESSGDDQDELD. Residues 254-264 are compositionally biased toward polar residues; the sequence is WKSSVLSSNKQ.

The protein belongs to the ORC6 family. As to quaternary structure, component of the origin recognition complex (ORC) composed of at least ORC1, ORC2, ORC3, ORC4, ORC5 and ORC6. ORC is regulated in a cell-cycle and development dependent manner. It is sequentially assembled at the exit from anaphase of mitosis and disassembled as cells enter S phase.

It localises to the nucleus. In terms of biological role, component of the origin recognition complex (ORC) that binds origins of replication. DNA-binding is ATP-dependent. The specific DNA sequences that define origins of replication have not been identified yet. ORC is required to assemble the pre-replication complex necessary to initiate DNA replication. In Oryza sativa subsp. indica (Rice), this protein is Origin of replication complex subunit 6.